Consider the following 831-residue polypeptide: Prolactin receptor (831 aa).

A signal peptide spans 1–23; the sequence is MKQDLISSVQIILFLPLTTVGLA. At 24–438 the chain is on the extracellular side; the sequence is GQSFPGKPKI…QIPNDFRVKD (415 aa). Fibronectin type-III domains are found at residues 30–128, 129–227, 230–331, and 332–433; these read KPKI…VQPG, SPVN…IPSG, PPEK…VQPD, and PPVN…IPND. A disulfide bond links Cys-36 and Cys-46. Asn-59 carries an N-linked (GlcNAc...) asparagine glycan. Residues Cys-75 and Cys-86 are joined by a disulfide bond. N-linked (GlcNAc...) asparagine glycosylation is found at Asn-91, Asn-100, Asn-112, Asn-132, Asn-262, Asn-303, Asn-315, and Asn-335. Zn(2+) contacts are provided by Asp-414 and His-416. The WSXWS motif motif lies at 419-423; that stretch reads WSEWS. A helical transmembrane segment spans residues 439–459; sequence MIVWIVLGVLSSLICLIMSWT. The Cytoplasmic portion of the chain corresponds to 460–831; it reads MVLKGYRMIT…DPSSFMPSFK (372 aa). The Box 1 motif motif lies at 471–479; that stretch reads MLPPVPGPK. 3 disordered regions span residues 527–563, 774–796, and 808–831; these read QQLM…SPSL, RVPH…QQGQ, and PSDC…PSFK. A compositionally biased stretch (polar residues) spans 787-796; that stretch reads ETSQSLQQGQ.

This sequence belongs to the type I cytokine receptor family. Type 1 subfamily.

Its subcellular location is the membrane. Its function is as follows. This is a receptor for the anterior pituitary hormone prolactin. The sequence is that of Prolactin receptor (PRLR) from Gallus gallus (Chicken).